Here is a 337-residue protein sequence, read N- to C-terminus: MKHLLSTEDLSLANAIRILDTAEEMAAVGDREVKKLPALRGRTVVNLFFEDSTRTRISFEAAAKRLSADVINFAAKGSSVSKGESLKDTAQTLAAMGADAVVIRHWASGAPHRLAATDWIDAAVINAGDGTHEHPTQALLDAFTMRRHWARLHGTPSAGADLKGMRVAIAGDVLHSRVARSNVWLLRTLGAEVTLVAPPTLLPIGVGQWPCSVSYDMDETLAKGVDAVVMLRVQGERMNASFFPTTREYSRRWGFDDNRLRALDSLGLKDTIIMHPGPMNRGLEISSAAADSPRSTVLAQVRNGVSVRMAALYLLLSGDTREPALTPNAAYSTKESH.

Residues R54 and T55 each coordinate carbamoyl phosphate. L-aspartate is bound at residue K82. R104, H134, and Q137 together coordinate carbamoyl phosphate. L-aspartate-binding residues include R177 and R232. The carbamoyl phosphate site is built by G277 and P278.

It belongs to the aspartate/ornithine carbamoyltransferase superfamily. ATCase family. In terms of assembly, heterododecamer (2C3:3R2) of six catalytic PyrB chains organized as two trimers (C3), and six regulatory PyrI chains organized as three dimers (R2).

It carries out the reaction carbamoyl phosphate + L-aspartate = N-carbamoyl-L-aspartate + phosphate + H(+). It functions in the pathway pyrimidine metabolism; UMP biosynthesis via de novo pathway; (S)-dihydroorotate from bicarbonate: step 2/3. Catalyzes the condensation of carbamoyl phosphate and aspartate to form carbamoyl aspartate and inorganic phosphate, the committed step in the de novo pyrimidine nucleotide biosynthesis pathway. The polypeptide is Aspartate carbamoyltransferase catalytic subunit (Arthrobacter sp. (strain FB24)).